A 380-amino-acid polypeptide reads, in one-letter code: uncharacterized protein (380 aa).

HTH tetR-type domains are found at residues 3–63 and 201–262; these read ESAE…KEGL and VRTR…CAEI. Positions 225 to 244 form a DNA-binding region, H-T-H motif; it reads TISDITRKSNIRRATFYDHY.

This is an uncharacterized protein from Bacillus subtilis (strain 168).